We begin with the raw amino-acid sequence, 410 residues long: Na(+)-translocating NADH-quinone reductase subunit B (410 aa).

The next 3 helical transmembrane spans lie at 56–76, 119–139, and 159–179; these read MMIL…YNVG, LFGA…GGFW, and SILF…ALGI. Thr-232 carries the FMN phosphoryl threonine modification. Transmembrane regions (helical) follow at residues 266–286, 293–313, 318–338, 347–367, and 377–397; these read GSIG…IVFA, IIAG…FIGS, MFAM…GMLF, SFTN…CVLI, and GMML…YFVA.

The protein belongs to the NqrB/RnfD family. In terms of assembly, composed of six subunits; NqrA, NqrB, NqrC, NqrD, NqrE and NqrF. The cofactor is FMN.

Its subcellular location is the cell inner membrane. The catalysed reaction is a ubiquinone + n Na(+)(in) + NADH + H(+) = a ubiquinol + n Na(+)(out) + NAD(+). In terms of biological role, NQR complex catalyzes the reduction of ubiquinone-1 to ubiquinol by two successive reactions, coupled with the transport of Na(+) ions from the cytoplasm to the periplasm. NqrA to NqrE are probably involved in the second step, the conversion of ubisemiquinone to ubiquinol. The sequence is that of Na(+)-translocating NADH-quinone reductase subunit B from Neisseria meningitidis serogroup B (strain ATCC BAA-335 / MC58).